A 215-amino-acid polypeptide reads, in one-letter code: Ribose-5-phosphate isomerase A (215 aa).

Substrate contacts are provided by residues 26 to 29 (TGST), 79 to 82 (DGAD), and 92 to 95 (KGGG). Catalysis depends on E101, which acts as the Proton acceptor. K119 is a substrate binding site.

The protein belongs to the ribose 5-phosphate isomerase family. Homodimer.

It catalyses the reaction aldehydo-D-ribose 5-phosphate = D-ribulose 5-phosphate. It functions in the pathway carbohydrate degradation; pentose phosphate pathway; D-ribose 5-phosphate from D-ribulose 5-phosphate (non-oxidative stage): step 1/1. In terms of biological role, catalyzes the reversible conversion of ribose-5-phosphate to ribulose 5-phosphate. In Stenotrophomonas maltophilia (strain R551-3), this protein is Ribose-5-phosphate isomerase A.